The chain runs to 144 residues: HTH-type transcriptional regulator MntR (144 aa).

In terms of domain architecture, HTH dtxR-type spans Met-1–Thr-63. Mn(2+) contacts are provided by Asp-8, Glu-11, His-77, Glu-99, Glu-102, and His-103.

The protein belongs to the DtxR/MntR family. As to quaternary structure, homodimer.

It localises to the cytoplasm. With respect to regulation, DNA binding is strongly activated by Mn(2+). Functionally, central regulator of manganese homeostasis. The protein is HTH-type transcriptional regulator MntR of Bacillus pumilus (strain SAFR-032).